The sequence spans 53 residues: MGMSVSHLLIVLLIIFVLFGAGKLPQVMSDLAKGLKAFKDGMKDDGSDNDKNK.

The chain crosses the membrane as a helical span at residues Met1 to Ala21.

The protein belongs to the TatA/E family. In terms of assembly, the Tat system comprises two distinct complexes: a TatABC complex, containing multiple copies of TatA, TatB and TatC subunits, and a separate TatA complex, containing only TatA subunits. Substrates initially bind to the TatABC complex, which probably triggers association of the separate TatA complex to form the active translocon.

It is found in the cell inner membrane. Functionally, part of the twin-arginine translocation (Tat) system that transports large folded proteins containing a characteristic twin-arginine motif in their signal peptide across membranes. TatA could form the protein-conducting channel of the Tat system. The protein is Sec-independent protein translocase protein TatA of Rickettsia massiliae (strain Mtu5).